The following is a 700-amino-acid chain: Methionine--tRNA ligase (700 aa).

The 'HIGH' region signature appears at 16–26; it reads PYANGAFHVGH. Positions 148, 151, 161, and 164 each coordinate Zn(2+). The 'KMSKS' region motif lies at 337-341; sequence KMSKS. Lys340 is an ATP binding site. Residues 594 to 700 form the tRNA-binding domain; it reads DFAKIDLRIA…PGAEPGMRVG (107 aa).

This sequence belongs to the class-I aminoacyl-tRNA synthetase family. MetG type 1 subfamily. In terms of assembly, homodimer. It depends on Zn(2+) as a cofactor.

The protein resides in the cytoplasm. The enzyme catalyses tRNA(Met) + L-methionine + ATP = L-methionyl-tRNA(Met) + AMP + diphosphate. In terms of biological role, is required not only for elongation of protein synthesis but also for the initiation of all mRNA translation through initiator tRNA(fMet) aminoacylation. The protein is Methionine--tRNA ligase of Janthinobacterium sp. (strain Marseille) (Minibacterium massiliensis).